The following is a 315-amino-acid chain: Methionyl-tRNA formyltransferase (315 aa).

(6S)-5,6,7,8-tetrahydrofolate is bound at residue 113 to 116; it reads SLLP.

This sequence belongs to the Fmt family.

The catalysed reaction is L-methionyl-tRNA(fMet) + (6R)-10-formyltetrahydrofolate = N-formyl-L-methionyl-tRNA(fMet) + (6S)-5,6,7,8-tetrahydrofolate + H(+). In terms of biological role, attaches a formyl group to the free amino group of methionyl-tRNA(fMet). The formyl group appears to play a dual role in the initiator identity of N-formylmethionyl-tRNA by promoting its recognition by IF2 and preventing the misappropriation of this tRNA by the elongation apparatus. The chain is Methionyl-tRNA formyltransferase from Photorhabdus laumondii subsp. laumondii (strain DSM 15139 / CIP 105565 / TT01) (Photorhabdus luminescens subsp. laumondii).